Here is a 397-residue protein sequence, read N- to C-terminus: Elongation factor Tu (397 aa).

Residues 10–206 form the tr-type G domain; the sequence is KPHVNIGTIG…AVDSYIPTPE (197 aa). The segment at 19 to 26 is G1; that stretch reads GHVDHGKT. Position 19–26 (19–26) interacts with GTP; the sequence is GHVDHGKT. Mg(2+) is bound at residue T26. A G2 region spans residues 60–64; that stretch reads GITIN. The G3 stretch occupies residues 81 to 84; sequence DCPG. GTP is bound by residues 81 to 85 and 136 to 139; these read DCPGH and NKAD. The interval 136–139 is G4; sequence NKAD. The tract at residues 174-176 is G5; it reads SAL.

Belongs to the TRAFAC class translation factor GTPase superfamily. Classic translation factor GTPase family. EF-Tu/EF-1A subfamily. Monomer.

Its subcellular location is the cytoplasm. The enzyme catalyses GTP + H2O = GDP + phosphate + H(+). GTP hydrolase that promotes the GTP-dependent binding of aminoacyl-tRNA to the A-site of ribosomes during protein biosynthesis. The sequence is that of Elongation factor Tu from Clostridium beijerinckii (strain ATCC 51743 / NCIMB 8052) (Clostridium acetobutylicum).